We begin with the raw amino-acid sequence, 215 residues long: Adenylate kinase (215 aa).

10–15 lines the ATP pocket; that stretch reads GTGKGT. Residues 30–59 are NMP; it reads STGDMLRESVVLKNKIGMIIKNIIEEGKLV. AMP is bound by residues T31, R36, 57–59, 85–88, and Q92; these read KLV and GFPR. Residues 122–159 are LID; the sequence is GRRIHIQSGRIYHVKFKPPKIKDKDDLTGQTLITRKDD. ATP-binding positions include R123 and 132–133; that span reads IY. Residues R156 and R167 each contribute to the AMP site. L200 is a binding site for ATP.

It belongs to the adenylate kinase family. In terms of assembly, monomer.

Its subcellular location is the cytoplasm. The enzyme catalyses AMP + ATP = 2 ADP. Its pathway is purine metabolism; AMP biosynthesis via salvage pathway; AMP from ADP: step 1/1. Its function is as follows. Catalyzes the reversible transfer of the terminal phosphate group between ATP and AMP. Plays an important role in cellular energy homeostasis and in adenine nucleotide metabolism. The polypeptide is Adenylate kinase (Buchnera aphidicola subsp. Acyrthosiphon pisum (strain 5A)).